The following is a 734-amino-acid chain: Photosystem I P700 chlorophyll a apoprotein A2 (734 aa).

Transmembrane regions (helical) follow at residues 46-69 (IFASHFGQLAIIFLWTSGNLFHVA), 135-158 (LYNGALFLVILSSISLIAGWLHLQ), 175-199 (LNHHLSGLFGVSSLAWTGHLVHVAI), 273-291 (IAHHHLAIAVVFIIAGHMY), 330-353 (LHFQLGLALASLGVITSLVAQHMY), 369-395 (AALYTHHQYIAGFIMTGAFAHGAIFFI), 417-439 (AIISHLSWASLFLGFHTLGLYVH), and 517-535 (FLVHHAIALGLHTTTLILV). [4Fe-4S] cluster contacts are provided by cysteine 559 and cysteine 568. The next 2 helical transmembrane spans lie at 575–596 (AFYLAVFWMLNTIGWVTFYWHW) and 643–665 (LSVWAWMFLFGHLVWATGFMFLI). Chlorophyll a contacts are provided by histidine 654, methionine 662, and tyrosine 670. A phylloquinone-binding site is contributed by tryptophan 671. The helical transmembrane segment at 707–727 (LVGLAHFSVGYIFTYAAFLIA) threads the bilayer.

It belongs to the PsaA/PsaB family. The PsaA/B heterodimer binds the P700 chlorophyll special pair and subsequent electron acceptors. PSI consists of a core antenna complex that captures photons, and an electron transfer chain that converts photonic excitation into a charge separation. The eukaryotic PSI reaction center is composed of at least 11 subunits. Requires P700 is a chlorophyll a/chlorophyll a' dimer, A0 is one or more chlorophyll a, A1 is one or both phylloquinones and FX is a shared 4Fe-4S iron-sulfur center. as cofactor.

Its subcellular location is the plastid. It localises to the chloroplast thylakoid membrane. It catalyses the reaction reduced [plastocyanin] + hnu + oxidized [2Fe-2S]-[ferredoxin] = oxidized [plastocyanin] + reduced [2Fe-2S]-[ferredoxin]. Functionally, psaA and PsaB bind P700, the primary electron donor of photosystem I (PSI), as well as the electron acceptors A0, A1 and FX. PSI is a plastocyanin-ferredoxin oxidoreductase, converting photonic excitation into a charge separation, which transfers an electron from the donor P700 chlorophyll pair to the spectroscopically characterized acceptors A0, A1, FX, FA and FB in turn. Oxidized P700 is reduced on the lumenal side of the thylakoid membrane by plastocyanin. The sequence is that of Photosystem I P700 chlorophyll a apoprotein A2 from Marchantia polymorpha (Common liverwort).